A 271-amino-acid polypeptide reads, in one-letter code: MSRIQSTFAALAAQGKKGLIPFMTAGDPDPARTVEFMHALAKGGADVIELGVPFSDPMADGPVIQQSSERALAKGVSLRHVLADVKRFRESDDKTPVVLMGYANPIERMGADAFAAAAKDAGVDGVLVVDYPPEESANFAETMKAAGIDPIFLLAPTSTDERIAEVGKIASGYVYYVSLKGVTGAANLDVLSIAGKIPAIKSRVPLPVGVGFGIRDAQSARAVAEVSDAVVIGSRIVQLLEEAAPQSAAGKLTNFIKEIRQALDSIGATAG.

Catalysis depends on proton acceptor residues Glu49 and Asp60.

Belongs to the TrpA family. In terms of assembly, tetramer of two alpha and two beta chains.

The enzyme catalyses (1S,2R)-1-C-(indol-3-yl)glycerol 3-phosphate + L-serine = D-glyceraldehyde 3-phosphate + L-tryptophan + H2O. It participates in amino-acid biosynthesis; L-tryptophan biosynthesis; L-tryptophan from chorismate: step 5/5. Its function is as follows. The alpha subunit is responsible for the aldol cleavage of indoleglycerol phosphate to indole and glyceraldehyde 3-phosphate. This is Tryptophan synthase alpha chain from Paraburkholderia phymatum (strain DSM 17167 / CIP 108236 / LMG 21445 / STM815) (Burkholderia phymatum).